The sequence spans 132 residues: Small ribosomal subunit protein uS8 (132 aa).

It belongs to the universal ribosomal protein uS8 family. As to quaternary structure, part of the 30S ribosomal subunit. Contacts proteins S5 and S12.

Functionally, one of the primary rRNA binding proteins, it binds directly to 16S rRNA central domain where it helps coordinate assembly of the platform of the 30S subunit. The sequence is that of Small ribosomal subunit protein uS8 from Brucella ovis (strain ATCC 25840 / 63/290 / NCTC 10512).